We begin with the raw amino-acid sequence, 443 residues long: Methyl-coenzyme M reductase I subunit beta (443 aa).

Y367 is a coenzyme M binding site. G369 contacts coenzyme B.

Belongs to the methyl-coenzyme M reductase beta subunit family. MCR is a hexamer of two alpha, two beta, and two gamma chains, forming a dimer of heterotrimers. The cofactor is coenzyme F430.

Its subcellular location is the cytoplasm. It catalyses the reaction coenzyme B + methyl-coenzyme M = methane + coenzyme M-coenzyme B heterodisulfide. It participates in one-carbon metabolism; methyl-coenzyme M reduction; methane from methyl-coenzyme M: step 1/1. Component of the methyl-coenzyme M reductase (MCR) I that catalyzes the reductive cleavage of methyl-coenzyme M (CoM-S-CH3 or 2-(methylthio)ethanesulfonate) using coenzyme B (CoB or 7-mercaptoheptanoylthreonine phosphate) as reductant which results in the production of methane and the mixed heterodisulfide of CoB and CoM (CoM-S-S-CoB). This is the final step in methanogenesis. In Methanothermobacter thermautotrophicus (strain ATCC 29096 / DSM 1053 / JCM 10044 / NBRC 100330 / Delta H) (Methanobacterium thermoautotrophicum), this protein is Methyl-coenzyme M reductase I subunit beta (mcrB).